We begin with the raw amino-acid sequence, 562 residues long: Extracellular matrix protein 1 (562 aa).

Residues 1 to 19 (MGTIRSSALILACLALASA) form the signal peptide. Disordered stretches follow at residues 46–87 (GYAA…SSPE) and 119–171 (QKEQ…WNPA). Residues 129-154 (IEQKEIDPPVQHQEEIVQSRQKEEKP) show a composition bias toward basic and acidic residues. 2 tandem repeats follow at residues 172–301 (RHCQ…RPDY) and 305–427 (PCPI…YPNY). A 2 X approximate repeats region spans residues 172–427 (RHCQQGRRGI…FAHLAPYPNY (256 aa)). Residues N376, N466, and N538 are each glycosylated (N-linked (GlcNAc...) asparagine). The disordered stretch occupies residues 539-562 (ATGLGQQGPTGGTNVGPAPGSKEE). Residues 543–552 (GQQGPTGGTN) are compositionally biased toward gly residues. S559 is modified (phosphoserine).

In terms of assembly, interacts (via C-terminus) with HSPG2 (via C-terminus). Interacts with EFEMP1/FBLN3 and LAMB3. Interacts with MMP9.

It localises to the secreted. It is found in the extracellular space. The protein localises to the extracellular matrix. Involved in endochondral bone formation as negative regulator of bone mineralization. Stimulates the proliferation of endothelial cells and promotes angiogenesis. Inhibits MMP9 proteolytic activity. The sequence is that of Extracellular matrix protein 1 (Ecm1) from Rattus norvegicus (Rat).